The sequence spans 2476 residues: Transcriptional regulator ATRX (2476 aa).

A Glycyl lysine isopeptide (Lys-Gly) (interchain with G-Cter in SUMO2) cross-link involves residue Lys-10. Residues 24 to 154 (HSSEESEETC…FRSRSKMKAD (131 aa)) are disordered. Residues Ser-25 and Ser-34 each carry the phosphoserine modification. A compositionally biased stretch (polar residues) spans 40-57 (MNQSTDKICGSGLNSDMM). The span at 58-72 (ENNKEEGASTSEKSR) shows a compositional bias: basic and acidic residues. Tyr-89 carries the post-translational modification Phosphotyrosine. Ser-92 is subject to Phosphoserine. Residues 98-107 (TDENVNEKAA) show a composition bias toward basic and acidic residues. The segment covering 108-121 (TENSENDITMQSLP) has biased composition (polar residues). Position 111 is a phosphoserine (Ser-111). Residues 134–154 (NEDKDDFKGPEFRSRSKMKAD) show a composition bias toward basic and acidic residues. Glycyl lysine isopeptide (Lys-Gly) (interchain with G-Cter in SUMO2) cross-links involve residues Lys-137 and Lys-141. Residues 158–295 (KRGEDGLHGI…LEQLLQQNKK (138 aa)) enclose the ADD domain. The GATA-type; atypical zinc-finger motif lies at 169 to 205 (SCTACGQQVNHFQKDSIYRHPSLKVLICKNCFKYYMS). The residue at position 212 (Ser-212) is a Phosphoserine. Residues 216–271 (DEQCRWCAEGGNLICCDFCHNAFCKKCILRNLGRKELSTIMDENNQWYCYICQPEP) form a PHD-type; atypical zinc finger. Lys-298 participates in a covalent cross-link: Glycyl lysine isopeptide (Lys-Gly) (interchain with G-Cter in SUMO2). Ser-315 is subject to Phosphoserine. Disordered regions lie at residues 427-451 (EKNT…EKSY), 466-507 (SVKA…DLDM), and 525-568 (ESAM…NIKS). Lys-439 is covalently cross-linked (Glycyl lysine isopeptide (Lys-Gly) (interchain with G-Cter in SUMO2)). Residues 466–494 (SVKAIDGEEQRAHKSTSGEHKGSGRKDGS) are compositionally biased toward basic and acidic residues. The segment covering 549-559 (ESSSVKLNVSS) has biased composition (polar residues). A PxVxL motif motif is present at residues 573–586 (KVRKELFVKLTPVS). At Thr-583 the chain carries Phosphothreonine. Disordered stretches follow at residues 585 to 877 (VSLS…GGSI) and 893 to 1464 (PGVS…GRKK). Phosphoserine occurs at positions 586, 590, 626, 663, 665, 717, and 719. Residues 615–630 (SSEKCRPREEISDHEN) show a composition bias toward basic and acidic residues. Residues 732–746 (MGHSSSSDTDINEPQ) show a composition bias toward polar residues. 7 positions are modified to phosphoserine: Ser-766, Ser-801, Ser-828, Ser-829, Ser-854, Ser-855, and Ser-871. The span at 819-849 (SVPEKKEEDSSEDEKQGKKVVDNGGHERAKT) shows a compositional bias: basic and acidic residues. Positions 899 to 922 (GAEKPSVKEENVNSPEDKRVSKTK) are enriched in basic and acidic residues. The span at 923 to 937 (EKTKHLRSRQSRKGK) shows a compositional bias: basic residues. Ser-941 and Ser-953 each carry phosphoserine. The span at 943 to 963 (GTDRFPKKEQSDESSEGEKKQ) shows a compositional bias: basic and acidic residues. Over residues 964 to 973 (SRQRPGTKGK) the composition is skewed to basic residues. Over residues 974-988 (KAPDLKGETLKREQE) the composition is skewed to basic and acidic residues. Lys-984 participates in a covalent cross-link: Glycyl lysine isopeptide (Lys-Gly) (interchain with G-Cter in SUMO2). Phosphoserine occurs at positions 991, 992, 993, and 1041. Basic and acidic residues predominate over residues 1031–1061 (DKSCEKKEELSDSVDKLPGKGDSCDSSEDKK). Positions 1062–1074 (TRNRVSLREKKRF) are enriched in basic residues. At Arg-1063 the chain carries Citrulline. Composition is skewed to basic and acidic residues over residues 1083–1096 (KRPE…EKSL) and 1103–1129 (STEK…KEVK). Residues 1146-1175 (KQKKQRTSAKKKTGNTKEKKRNSLRATPKR) are compositionally biased toward basic residues. An interaction with DAXX region spans residues 1169–1313 (LRATPKRKQV…VNQVNSESDS (145 aa)). 3 positions are modified to phosphoserine: Ser-1223, Ser-1224, and Ser-1232. Residues 1246–1260 (PENRIAKKMLLEEIK) show a composition bias toward basic and acidic residues. Acidic residues predominate over residues 1265–1276 (SDEDGSSDDEPD). Phosphoserine is present on residues Ser-1309, Ser-1311, and Ser-1313. The segment covering 1321 to 1332 (PRYRHRLLRHKL) has biased composition (basic residues). Phosphoserine occurs at positions 1335 and 1339. Composition is skewed to basic and acidic residues over residues 1340–1355 (GEEK…EAKG) and 1395–1404 (KKAELEENQR). Positions 1406 to 1415 (YKQKKKRRRI) are enriched in basic residues. Over residues 1416-1436 (KVQEDSSSENKSHSEEDKKEG) the composition is skewed to basic and acidic residues. Acidic residues predominate over residues 1437–1453 (DEEDEEDEDEDEEDEND). Lys-1473 participates in a covalent cross-link: Glycyl lysine isopeptide (Lys-Gly) (interchain with G-Cter in SUMO2). Residue Ser-1512 is modified to Phosphoserine. Thr-1514 bears the Phosphothreonine mark. Positions 1566–1753 (KTKKSPGSGC…HCMVNFIKEN (188 aa)) constitute a Helicase ATP-binding domain. ATP is bound at residue 1579-1586 (HCMGLGKT). A DEGH box motif is present at residues 1704 to 1707 (DEGH). 2 positions are modified to phosphoserine: Ser-1891 and Ser-1898. The interval 1898–1982 (SDSDETSKSL…STSNPSSPAP (85 aa)) is disordered. Positions 1902 to 1913 (ETSKSLSSDEKK) are enriched in basic and acidic residues. Residue Lys-1965 forms a Glycyl lysine isopeptide (Lys-Gly) (interchain with G-Cter in SUMO1); alternate linkage. Lys-1965 participates in a covalent cross-link: Glycyl lysine isopeptide (Lys-Gly) (interchain with G-Cter in SUMO2); alternate. A Glycyl lysine isopeptide (Lys-Gly) (interchain with G-Cter in SUMO2) cross-link involves residue Lys-1970. Low complexity predominate over residues 1971–1982 (TTSTSNPSSPAP). Phosphoserine occurs at positions 1975 and 1979. Residues 1993–2263 (DAEVLEHSGK…RKAAWAEYEA (271 aa)) form an interaction with MECP2 region. Residues 2008-2188 (EILRMAEEIG…ERHFTMNELT (181 aa)) form the Helicase C-terminal domain. Ser-2203 bears the Phosphoserine mark. The disordered stretch occupies residues 2445 to 2476 (SVAGGMQPPPLQRAPPPTVRSKNPGPSPGKSM). Over residues 2451–2462 (QPPPLQRAPPPT) the composition is skewed to pro residues. Arg-2457 and Arg-2464 each carry omega-N-methylarginine.

This sequence belongs to the SNF2/RAD54 helicase family. In terms of assembly, interacts with DAXX to form the chromatin remodeling complex ATRX:DAXX. Probably binds EZH2. Binds annexin V in a calcium and phosphatidylcholine/phosphatidylserine-dependent manner. Interacts directly with CBX5 via the PxVxL motif. Interacts with RAD50, MRE11 and NBN; indicative for an association with the MRN complex. Interacts with histone MACROH2A1. Interacts with histone H3 peptides methylated at 'Lys-10' with preferences H3K9me3 &gt; H3K9me2 &gt; H3K9me1. Interacts with histone H3 peptides unmethylated at 'Lys-5' (H3K4me0). Interacts with MECP2, SMC1 and SMC3. Interacts with SETDB1, TRIM28 and ZNF274. In terms of processing, citrullinated by PADI4.

It is found in the nucleus. It localises to the chromosome. The protein resides in the telomere. Its subcellular location is the PML body. It catalyses the reaction ATP + H2O = ADP + phosphate + H(+). Its function is as follows. Involved in transcriptional regulation and chromatin remodeling. Facilitates DNA replication in multiple cellular environments and is required for efficient replication of a subset of genomic loci. Binds to DNA tandem repeat sequences in both telomeres and euchromatin and in vitro binds DNA quadruplex structures. May help stabilizing G-rich regions into regular chromatin structures by remodeling G4 DNA and incorporating H3.3-containing nucleosomes. Catalytic component of the chromatin remodeling complex ATRX:DAXX which has ATP-dependent DNA translocase activity and catalyzes the replication-independent deposition of histone H3.3 in pericentric DNA repeats outside S-phase and telomeres, and the in vitro remodeling of H3.3-containing nucleosomes. Its heterochromatin targeting is proposed to involve a combinatorial readout of histone H3 modifications (specifically methylation states of H3K9 and H3K4) and association with CBX5. Involved in maintaining telomere structural integrity in embryonic stem cells probably implying recruitment of CBX5 to telomeres. Reports on the involvement in transcriptional regulation of telomeric repeat-containing RNA (TERRA) are conflicting; according is required for its transcriptional repression in embryonic stem cells. Acts as a negative regulator of chromatin incorporation of transcriptionally repressive histone MACROH2A1, particularily at telomeres. Participates in the allele-specific gene expression at the imprinted IGF2/H19 gene locus. On the maternal allele, required for the chromatin occupancy of SMC1 and CTCTF within the H19 imprinting control region (ICR) and involved in esatblishment of histone tails modifications in the ICR. Binds to zinc-finger coding genes with atypical chromatin signatures and regulates its H3K9me3 levels. Forms a complex with ZNF274, TRIM28 and SETDB1 to facilitate the deposition and maintenance of H3K9me3 at the 3' exons of zinc-finger genes. This Mus musculus (Mouse) protein is Transcriptional regulator ATRX (Atrx).